A 989-amino-acid chain; its full sequence is SWI/SNF-related matrix-associated actin-dependent regulator of chromatin subfamily A containing DEAD/H box 1 homolog (989 aa).

The tract at residues 1 to 288 (MSTTSDFQTG…RRAKRGETKN (288 aa)) is disordered. The segment covering 72 to 105 (DDDDEDYVDETMPSEDEEDFDNNEEDEDDDDYEE) has biased composition (acidic residues). The segment covering 109-120 (RKRKAPSKKKLV) has biased composition (basic residues). Positions 124–140 (ENYRREDSETPEPEMKR) are enriched in basic and acidic residues. Positions 187–200 (DDESEDDFINDEEI) are enriched in acidic residues. Composition is skewed to basic and acidic residues over residues 201 to 221 (SEKGSGKGSEKEESEGSGKDS) and 241 to 250 (AQKEQKKKAE). Residues 251 to 276 (SDEDWEEDEDDMNADGDETPSDDSDI) show a composition bias toward acidic residues. Over residues 277 to 288 (EERRAKRGETKN) the composition is skewed to basic and acidic residues. Residues 406–574 (IMMYNKDLNA…ISLMYFVLSK (169 aa)) enclose the Helicase ATP-binding domain. 419–426 (DEMGLGKT) contributes to the ATP binding site. Positions 525–528 (DEGH) match the DEGH box motif. Residues 757-912 (QLDVMLPEIQ…GVKGQLDEDA (156 aa)) enclose the Helicase C-terminal domain. Residues 941 to 989 (RYDDVEDDSGDSKNGIDAEEAAKKEDEAVKEPVEKEQQKEEESQPSTSA) are disordered. The span at 950 to 982 (GDSKNGIDAEEAAKKEDEAVKEPVEKEQQKEEE) shows a compositional bias: basic and acidic residues.

The protein belongs to the SNF2/RAD54 helicase family.

It is found in the nucleus. The protein localises to the chromosome. The enzyme catalyses ATP + H2O = ADP + phosphate + H(+). In terms of biological role, DNA helicase that possesses intrinsic ATP-dependent nucleosome-remodeling activity and is both required for DNA repair and heterochromatin organization. Promotes DNA end resection of double-strand breaks (DSBs) following DNA damage: probably acts by weakening histone DNA interactions in nucleosomes flanking DSBs. The sequence is that of SWI/SNF-related matrix-associated actin-dependent regulator of chromatin subfamily A containing DEAD/H box 1 homolog from Caenorhabditis elegans.